Here is a 218-residue protein sequence, read N- to C-terminus: Large ribosomal subunit protein uL3 (218 aa).

Positions 126-170 are disordered; the sequence is HGFSRGPMSHGSKNHREPGSTGAGTTPGRIYPGKRMAGRYGGKKR.

Belongs to the universal ribosomal protein uL3 family. As to quaternary structure, part of the 50S ribosomal subunit. Forms a cluster with proteins L14 and L19.

One of the primary rRNA binding proteins, it binds directly near the 3'-end of the 23S rRNA, where it nucleates assembly of the 50S subunit. This chain is Large ribosomal subunit protein uL3, found in Prochlorococcus marinus (strain MIT 9313).